A 70-amino-acid chain; its full sequence is Small ribosomal subunit protein bS21A (70 aa).

This sequence belongs to the bacterial ribosomal protein bS21 family.

The polypeptide is Small ribosomal subunit protein bS21A (rpsU1) (Burkholderia mallei (strain ATCC 23344)).